A 72-amino-acid polypeptide reads, in one-letter code: Large ribosomal subunit protein bL31 (72 aa).

It belongs to the bacterial ribosomal protein bL31 family. Type A subfamily. Part of the 50S ribosomal subunit.

Binds the 23S rRNA. The polypeptide is Large ribosomal subunit protein bL31 (Deinococcus geothermalis (strain DSM 11300 / CIP 105573 / AG-3a)).